Consider the following 171-residue polypeptide: Ribulose bisphosphate carboxylase small subunit, chloroplastic (171 aa).

The N-terminal 50 residues, 1 to 50, are a transit peptide targeting the chloroplast; it reads MATGAGAGAATVVSAFTGLKSTAQFPSSFKMSNAAAEWEQKTTSNGGRVR.

This sequence belongs to the RuBisCO small chain family. In terms of assembly, heterohexadecamer of 8 large and 8 small subunits.

The protein resides in the plastid. It is found in the chloroplast. Functionally, ruBisCO catalyzes two reactions: the carboxylation of D-ribulose 1,5-bisphosphate, the primary event in carbon dioxide fixation, as well as the oxidative fragmentation of the pentose substrate. Both reactions occur simultaneously and in competition at the same active site. Although the small subunit is not catalytic it is essential for maximal activity. This Pinus thunbergii (Japanese black pine) protein is Ribulose bisphosphate carboxylase small subunit, chloroplastic.